We begin with the raw amino-acid sequence, 252 residues long: Carbohydrate deacetylase (252 aa).

Mg(2+)-binding residues include H59 and H122.

This sequence belongs to the YdjC deacetylase family. In terms of assembly, homodimer. Requires Mg(2+) as cofactor.

Functionally, probably catalyzes the deacetylation of acetylated carbohydrates an important step in the degradation of oligosaccharides. This chain is Carbohydrate deacetylase, found in Vibrio cholerae serotype O1 (strain ATCC 39541 / Classical Ogawa 395 / O395).